The sequence spans 698 residues: MTSREQLVLQVLQELQEAVESEGLEGLVGAALEAKQVLSSFALPTCREGGPGPQVLEVDSVALSLYPEDAPRNMLPLVCKGEGSLLFEAASMLLWGDSGLSLELRARTVVEMLLHRHYYLQGMIDSKVMLQAVRYSLCSEESPEMTSLPSATLEAIFDADVKATCFPSSFSNVWHLYALASVLQRNIYSIYPMRNLKIRPYFNRVIRPRRCDHMPATLHIMWAGQPLTNHLFRHQYFAPVVGLEEVEAESATTSLAPTPPALAPLPPPAKTLELLSQDPGLSYSYLCERYSVTKSTFYRWRRQSQEHRQKVATRFSAKHFLQDSFHRGGVVPLQQFLQRFPEISRSTYYAWKHELLGSGTCQALGPMEELEKLTEEQVAEGLGCSSPAVSSPGMVLMQRAKLYLEHCISLNTLVPYRCFKRRFPGISRSTYYNWRRKALRRNPSFKPAPVLSVAGATQPASVGEKALLPWEGEVGEEAGKATGGGQPAPREFLPLRMPLSRWQRRLRREARKQVLSGHLPFCRFRLRYPSLSPSTFWVWKSLARGWPRSLSKLHIQAPTLGKGGIQEVEEKQEKEAGRNVTAAMAPPAGTLQMTASPGEDPGAALGGPSREGALQEGAMAQGRPMVAAAGGRDGQVLVMDMLATTKFKAQAKLFLQKRFQSKSFPSYKEFSALFPLTARSTYYMWKRALYDGLTLVDG.

Belongs to the vertnin family.

The protein localises to the nucleus. In terms of biological role, acts as a transcription factor that regulates development of thoracic vertebrae. The protein is Vertnin (VRTN) of Sus scrofa (Pig).